The following is a 218-amino-acid chain: Ribose-5-phosphate isomerase A (218 aa).

Substrate is bound by residues 28-31 (TGST), 81-84 (DGAD), and 94-97 (KGGG). E103 acts as the Proton acceptor in catalysis. K121 contributes to the substrate binding site.

It belongs to the ribose 5-phosphate isomerase family. Homodimer.

It catalyses the reaction aldehydo-D-ribose 5-phosphate = D-ribulose 5-phosphate. The protein operates within carbohydrate degradation; pentose phosphate pathway; D-ribose 5-phosphate from D-ribulose 5-phosphate (non-oxidative stage): step 1/1. Catalyzes the reversible conversion of ribose-5-phosphate to ribulose 5-phosphate. In Vibrio atlanticus (strain LGP32) (Vibrio splendidus (strain Mel32)), this protein is Ribose-5-phosphate isomerase A.